A 34-amino-acid chain; its full sequence is DCPTRCPTTCANGWECCKGYPCVNKACSGCTHGK.

2 positions are modified to 4-hydroxyproline: Pro-3 and Pro-7. Trp-14 is modified (6'-bromotryptophan). Position 18 is a 5-hydroxylysine (Lys-18). The residue at position 21 (Pro-21) is a 4-hydroxyproline. Lys-25 is subject to 5-hydroxylysine. His-32 bears the Histidine amide mark.

Post-translationally, contains 4 disulfide bonds. The diastereomeric form of 5-hydroxylysine found was not conclusively established, but it is probably 5R. As to expression, expressed by the venom duct.

It is found in the secreted. This Conasprella delessertii (Sozon's cone) protein is Conotoxin de13a.